We begin with the raw amino-acid sequence, 154 residues long: NADPH-dependent 7-cyano-7-deazaguanine reductase (154 aa).

The active-site Thioimide intermediate is the C52. Catalysis depends on D59, which acts as the Proton donor. Substrate is bound by residues 74–76 (VES) and 93–94 (HE).

This sequence belongs to the GTP cyclohydrolase I family. QueF type 1 subfamily.

The protein localises to the cytoplasm. The enzyme catalyses 7-aminomethyl-7-carbaguanine + 2 NADP(+) = 7-cyano-7-deazaguanine + 2 NADPH + 3 H(+). It participates in tRNA modification; tRNA-queuosine biosynthesis. Its function is as follows. Catalyzes the NADPH-dependent reduction of 7-cyano-7-deazaguanine (preQ0) to 7-aminomethyl-7-deazaguanine (preQ1). The chain is NADPH-dependent 7-cyano-7-deazaguanine reductase from Rhizobium rhizogenes (strain K84 / ATCC BAA-868) (Agrobacterium radiobacter).